The sequence spans 420 residues: 2,3-dimethylmalate dehydratase large subunit (420 aa).

Residues cysteine 301, cysteine 361, and cysteine 364 each contribute to the [4Fe-4S] cluster site.

It belongs to the aconitase/IPM isomerase family. LeuC type 2 subfamily. In terms of assembly, heterodimer of a large and a small subunit. Requires [4Fe-4S] cluster as cofactor.

It carries out the reaction (2R,3S)-2,3-dimethylmalate = dimethylmaleate + H2O. Its pathway is cofactor degradation; nicotinate degradation; propanoate and pyruvate from 6-hydroxynicotinate: step 7/8. This Eubacterium barkeri (Clostridium barkeri) protein is 2,3-dimethylmalate dehydratase large subunit (dmdA).